A 442-amino-acid chain; its full sequence is Tubulin beta chain (442 aa).

Glutamine 11, glutamate 69, serine 138, glycine 142, threonine 143, glycine 144, asparagine 204, and asparagine 226 together coordinate GTP. Glutamate 69 serves as a coordination point for Mg(2+).

It belongs to the tubulin family. Dimer of alpha and beta chains. A typical microtubule is a hollow water-filled tube with an outer diameter of 25 nm and an inner diameter of 15 nM. Alpha-beta heterodimers associate head-to-tail to form protofilaments running lengthwise along the microtubule wall with the beta-tubulin subunit facing the microtubule plus end conferring a structural polarity. Microtubules usually have 13 protofilaments but different protofilament numbers can be found in some organisms and specialized cells. Mg(2+) is required as a cofactor.

The protein localises to the cytoplasm. It is found in the cytoskeleton. Tubulin is the major constituent of microtubules, a cylinder consisting of laterally associated linear protofilaments composed of alpha- and beta-tubulin heterodimers. Microtubules grow by the addition of GTP-tubulin dimers to the microtubule end, where a stabilizing cap forms. Below the cap, tubulin dimers are in GDP-bound state, owing to GTPase activity of alpha-tubulin. This Pneumocystis carinii protein is Tubulin beta chain (TUB-B).